Here is a 326-residue protein sequence, read N- to C-terminus: Transcription cofactor vestigial-like protein 3 (326 aa).

Residues V57–E80 form a disordered region. K62 participates in a covalent cross-link: Glycyl lysine isopeptide (Lys-Gly) (interchain with G-Cter in SUMO2). Acidic residues predominate over residues E64–K75. A Glycyl lysine isopeptide (Lys-Gly) (interchain with G-Cter in SUMO2) cross-link involves residue K126. Disordered stretches follow at residues P175 to V203 and H233 to D256. Residues H233–P249 are compositionally biased toward basic residues.

Belongs to the vestigial family. Enriched in placenta.

It is found in the nucleus. In terms of biological role, may act as a specific coactivator for the mammalian TEFs. The polypeptide is Transcription cofactor vestigial-like protein 3 (VGLL3) (Homo sapiens (Human)).